Reading from the N-terminus, the 161-residue chain is Cap-associated protein CAF20 (161 aa).

Positions His52 to Pro72 are enriched in basic residues. Residues His52–Pro108 form a disordered region. Ser78 and Ser91 each carry phosphoserine. Thr99, Thr101, and Thr102 each carry phosphothreonine. The residue at position 154 (Ser154) is a Phosphoserine.

This sequence belongs to the CAF20 family. As to quaternary structure, interacts with TIF45. Phosphorylated by casein kinase II complex (CK2).

The protein resides in the cytoplasm. Its function is as follows. Acts as an inhibitor of cap-dependent translation. Competes with eIF4G1/TIF4631 and EAP1 for binding to eIF4E/TIF45 and interferes with the formation of the eIF4F complex, inhibiting translation and stabilizing mRNA. Binding affinity for eIF4E/TIF45 is 10-fold less than that of eIF4G1/TIF4631. Required for induction of pseudohyphal growth in response to nitrogen limitation, probably by regulating STE12 translation. The chain is Cap-associated protein CAF20 (CAF20) from Saccharomyces cerevisiae (strain ATCC 204508 / S288c) (Baker's yeast).